Reading from the N-terminus, the 226-residue chain is Enolase-phosphatase E1 (226 aa).

Belongs to the HAD-like hydrolase superfamily. MasA/MtnC family. Monomer. Mg(2+) serves as cofactor.

The catalysed reaction is 5-methylsulfanyl-2,3-dioxopentyl phosphate + H2O = 1,2-dihydroxy-5-(methylsulfanyl)pent-1-en-3-one + phosphate. It functions in the pathway amino-acid biosynthesis; L-methionine biosynthesis via salvage pathway; L-methionine from S-methyl-5-thio-alpha-D-ribose 1-phosphate: step 3/6. The protein operates within amino-acid biosynthesis; L-methionine biosynthesis via salvage pathway; L-methionine from S-methyl-5-thio-alpha-D-ribose 1-phosphate: step 4/6. Its function is as follows. Bifunctional enzyme that catalyzes the enolization of 2,3-diketo-5-methylthiopentyl-1-phosphate (DK-MTP-1-P) into the intermediate 2-hydroxy-3-keto-5-methylthiopentenyl-1-phosphate (HK-MTPenyl-1-P), which is then dephosphorylated to form the acireductone 1,2-dihydroxy-3-keto-5-methylthiopentene (DHK-MTPene). This is Enolase-phosphatase E1 from Shewanella baltica (strain OS223).